The following is a 901-amino-acid chain: Protein translocase subunit SecA (901 aa).

Residues Q87, 105–109, and D512 contribute to the ATP site; that span reads GEGKT. Residues 859-901 form a disordered region; sequence HQDDDSAAAAALAAQTGERKVGRNDPCPCGSGKKYKQCHGRLQ. Residues C885, C887, C896, and H897 each contribute to the Zn(2+) site. Positions 891 to 901 are enriched in basic residues; it reads KKYKQCHGRLQ.

The protein belongs to the SecA family. As to quaternary structure, monomer and homodimer. Part of the essential Sec protein translocation apparatus which comprises SecA, SecYEG and auxiliary proteins SecDF-YajC and YidC. Requires Zn(2+) as cofactor.

Its subcellular location is the cell inner membrane. The protein resides in the cytoplasm. It carries out the reaction ATP + H2O + cellular proteinSide 1 = ADP + phosphate + cellular proteinSide 2.. In terms of biological role, part of the Sec protein translocase complex. Interacts with the SecYEG preprotein conducting channel. Has a central role in coupling the hydrolysis of ATP to the transfer of proteins into and across the cell membrane, serving both as a receptor for the preprotein-SecB complex and as an ATP-driven molecular motor driving the stepwise translocation of polypeptide chains across the membrane. This Escherichia coli (strain 55989 / EAEC) protein is Protein translocase subunit SecA.